The primary structure comprises 147 residues: MEDDEEETTASTLRGKPRPPPVSAQSAFSYIPPRRLDPKEHSYYYRPARTGIISLYDCIFKRRLDYDQKLHRDDREHAKSLGLHVNEEEQERPVGVLTSSVYGKRINQPIEPLNRDFGRANHVQADFYRKNDIPSLKEPGFGHIAPS.

A disordered region spans residues 1-36; the sequence is MEDDEEETTASTLRGKPRPPPVSAQSAFSYIPPRRL.

As to quaternary structure, microtubule inner protein component of sperm flagellar doublet microtubules.

It localises to the cytoplasm. It is found in the cytoskeleton. Its subcellular location is the cilium axoneme. The protein resides in the flagellum axoneme. Functionally, microtubule inner protein (MIP) part of the dynein-decorated doublet microtubules (DMTs) in cilia axoneme, which is required for motile cilia beating. The protein is Cilia- and flagella-associated protein 90 of Homo sapiens (Human).